A 117-amino-acid polypeptide reads, in one-letter code: MNKKLLRARRALKLRKKLYLLGSVRLVVYRSLRHMYAQIVSEDNCNVLVAASTTEKLIASKLRVTGNKEAAAVVGQVIAERAFKKGIVHVSFDRSGFKYHGRVQILAEYARQFGLKF.

Belongs to the universal ribosomal protein uL18 family. In terms of assembly, part of the 50S ribosomal subunit; part of the 5S rRNA/L5/L18/L25 subcomplex. Contacts the 5S and 23S rRNAs.

In terms of biological role, this is one of the proteins that bind and probably mediate the attachment of the 5S RNA into the large ribosomal subunit, where it forms part of the central protuberance. The chain is Large ribosomal subunit protein uL18 from Blochmanniella floridana.